The chain runs to 485 residues: NADH-quinone oxidoreductase subunit N (485 aa).

14 helical membrane-spanning segments follow: residues 8–28 (LIAL…MLCI), 35–55 (FINS…LWFV), 75–95 (FYTG…YAWL), 105–125 (FYLL…ANHL), 127–147 (ALFL…GYAF), 159–179 (YTLL…LVYA), 203–223 (LLAG…LVPF), 235–255 (PVPV…AVVM), 271–291 (LVLA…ALSQ), 303–323 (IAHL…TLAL), 326–346 (VGVY…VVSL), 371–393 (LLSS…LGFI), 406–426 (HLGW…FYYL), and 449–469 (ALTA…LLGL).

This sequence belongs to the complex I subunit 2 family. In terms of assembly, NDH-1 is composed of 13 different subunits. Subunits NuoA, H, J, K, L, M, N constitute the membrane sector of the complex.

Its subcellular location is the cell inner membrane. It carries out the reaction a quinone + NADH + 5 H(+)(in) = a quinol + NAD(+) + 4 H(+)(out). Functionally, NDH-1 shuttles electrons from NADH, via FMN and iron-sulfur (Fe-S) centers, to quinones in the respiratory chain. The immediate electron acceptor for the enzyme in this species is believed to be ubiquinone. Couples the redox reaction to proton translocation (for every two electrons transferred, four hydrogen ions are translocated across the cytoplasmic membrane), and thus conserves the redox energy in a proton gradient. The chain is NADH-quinone oxidoreductase subunit N from Sodalis glossinidius (strain morsitans).